Consider the following 261-residue polypeptide: Cytochrome c oxidase subunit 3 (261 aa).

Over 1 to 15 (MVHQSHAYHMLKPSP) the chain is Mitochondrial matrix. The chain crosses the membrane as a helical span at residues 16–34 (WPLTGALSALLMTSGLAMW). The Mitochondrial intermembrane portion of the chain corresponds to 35–40 (FHFHST). The chain crosses the membrane as a helical span at residues 41-66 (TLLLTGMLTNALTMYQWWRDVVREST). Residues 67–72 (YQGHHT) lie on the Mitochondrial matrix side of the membrane. The chain crosses the membrane as a helical span at residues 73-105 (LPVQKGLRYGMILFITSEVFFFAGFFWAFYHSS). At 106–128 (LAPTPQLGGHWPPTGITPLNPLE) the chain is on the mitochondrial intermembrane side. Residues 129 to 152 (VPLLNTAVLLASGVSITWAHHSLM) traverse the membrane as a helical segment. At 153–155 (ENN) the chain is on the mitochondrial matrix side. A helical membrane pass occupies residues 156 to 183 (RTQMIQALLITILLGIYFTLLQASEYIE). At 184–190 (APFTISD) the chain is on the mitochondrial intermembrane side. The chain crosses the membrane as a helical span at residues 191-223 (GIYGSTFFMTTGFHGLHVIIGSTFLTVCLSCQL). The Mitochondrial matrix segment spans residues 224 to 232 (LFHFTSKHH). The chain crosses the membrane as a helical span at residues 233–256 (FGFEAAAWYWHFVDVVWLFLYVSI). The Mitochondrial intermembrane portion of the chain corresponds to 257–261 (YWWGS).

Belongs to the cytochrome c oxidase subunit 3 family. As to quaternary structure, component of the cytochrome c oxidase (complex IV, CIV), a multisubunit enzyme composed of 14 subunits. The complex is composed of a catalytic core of 3 subunits MT-CO1, MT-CO2 and MT-CO3, encoded in the mitochondrial DNA, and 11 supernumerary subunits COX4I, COX5A, COX5B, COX6A, COX6B, COX6C, COX7A, COX7B, COX7C, COX8 and NDUFA4, which are encoded in the nuclear genome. The complex exists as a monomer or a dimer and forms supercomplexes (SCs) in the inner mitochondrial membrane with NADH-ubiquinone oxidoreductase (complex I, CI) and ubiquinol-cytochrome c oxidoreductase (cytochrome b-c1 complex, complex III, CIII), resulting in different assemblies (supercomplex SCI(1)III(2)IV(1) and megacomplex MCI(2)III(2)IV(2)).

Its subcellular location is the mitochondrion inner membrane. It catalyses the reaction 4 Fe(II)-[cytochrome c] + O2 + 8 H(+)(in) = 4 Fe(III)-[cytochrome c] + 2 H2O + 4 H(+)(out). Component of the cytochrome c oxidase, the last enzyme in the mitochondrial electron transport chain which drives oxidative phosphorylation. The respiratory chain contains 3 multisubunit complexes succinate dehydrogenase (complex II, CII), ubiquinol-cytochrome c oxidoreductase (cytochrome b-c1 complex, complex III, CIII) and cytochrome c oxidase (complex IV, CIV), that cooperate to transfer electrons derived from NADH and succinate to molecular oxygen, creating an electrochemical gradient over the inner membrane that drives transmembrane transport and the ATP synthase. Cytochrome c oxidase is the component of the respiratory chain that catalyzes the reduction of oxygen to water. Electrons originating from reduced cytochrome c in the intermembrane space (IMS) are transferred via the dinuclear copper A center (CU(A)) of subunit 2 and heme A of subunit 1 to the active site in subunit 1, a binuclear center (BNC) formed by heme A3 and copper B (CU(B)). The BNC reduces molecular oxygen to 2 water molecules using 4 electrons from cytochrome c in the IMS and 4 protons from the mitochondrial matrix. This is Cytochrome c oxidase subunit 3 (MT-CO3) from Pongo pygmaeus (Bornean orangutan).